The sequence spans 175 residues: Probable chemoreceptor glutamine deamidase CheD (175 aa).

The protein belongs to the CheD family.

The enzyme catalyses L-glutaminyl-[protein] + H2O = L-glutamyl-[protein] + NH4(+). In terms of biological role, probably deamidates glutamine residues to glutamate on methyl-accepting chemotaxis receptors (MCPs), playing an important role in chemotaxis. This is Probable chemoreceptor glutamine deamidase CheD from Jannaschia sp. (strain CCS1).